We begin with the raw amino-acid sequence, 1153 residues long: Otoancorin (1153 aa).

Positions 1 to 22 (MSQEPTTYSLFLFLFLSHGVSS) are cleaved as a signal peptide. Asn156 is a glycosylation site (N-linked (GlcNAc...) asparagine). The N-linked (GlcNAc...) (complex) asparagine glycan is linked to Asn211. 10 N-linked (GlcNAc...) asparagine glycosylation sites follow: Asn244, Asn289, Asn321, Asn394, Asn398, Asn460, Asn544, Asn812, Asn911, and Asn974. Residues 1109-1128 (HSWQDAPASAGPTRTSSSRS) are disordered. A lipid anchor (GPI-anchor amidated alanine) is attached at Ala1130. Residues 1131–1153 (GALQSWGLWLGCPLLVLMAKLLW) constitute a propeptide, removed in mature form.

Belongs to the stereocilin family.

It localises to the apical cell membrane. Its subcellular location is the secreted. The protein localises to the extracellular space. It is found in the extracellular matrix. Functionally, may act as an adhesion molecule. The chain is Otoancorin (OTOA) from Homo sapiens (Human).